Reading from the N-terminus, the 422-residue chain is Keratan-sulfate endo-1,4-beta-galactosidase (422 aa).

Positions 1 to 46 (MRKTKFWLVLSLIATSLSIFACKKDSTATKNPIPEVSKAKASTKLL) are cleaved as a signal peptide. Positions 47–292 (NATTVATTDY…YVRVYKLPLF (246 aa)) constitute a GH16 domain. Glu-171 serves as the catalytic Nucleophile. Glu-176 (proton donor) is an active-site residue. Residues 291 to 406 (LFSNGDFESG…NTTATVYFYK (116 aa)) enclose the CBM-cenC domain.

Belongs to the glycosyl hydrolase 16 family.

It is found in the secreted. It carries out the reaction Endohydrolysis of (1-&gt;4)-beta-D-galactosidic linkages in keratan sulfate.. In terms of biological role, hydrolyzes internal endo-beta-galactosyl linkages in keratan sulfate and in various neolacto-type glycosphingolipids, producing sulfated and non-sulfated disaccharides, and glucosylceramides respectivly. The protein is Keratan-sulfate endo-1,4-beta-galactosidase of Sphingobacterium multivorum.